The chain runs to 323 residues: GMP reductase (323 aa).

The active-site Thioimidate intermediate is cysteine 174. Residue 203-226 (IIADGGIRHNGDIAKSVRFGASMV) participates in NADP(+) binding.

Belongs to the IMPDH/GMPR family. GuaC type 2 subfamily.

It carries out the reaction IMP + NH4(+) + NADP(+) = GMP + NADPH + 2 H(+). In terms of biological role, catalyzes the irreversible NADPH-dependent deamination of GMP to IMP. It functions in the conversion of nucleobase, nucleoside and nucleotide derivatives of G to A nucleotides, and in maintaining the intracellular balance of A and G nucleotides. This is GMP reductase from Oenococcus oeni (strain ATCC BAA-331 / PSU-1).